The primary structure comprises 85 residues: Cell division topological specificity factor (85 aa).

The protein belongs to the MinE family.

Functionally, prevents the cell division inhibition by proteins MinC and MinD at internal division sites while permitting inhibition at polar sites. This ensures cell division at the proper site by restricting the formation of a division septum at the midpoint of the long axis of the cell. The sequence is that of Cell division topological specificity factor from Shewanella amazonensis (strain ATCC BAA-1098 / SB2B).